A 352-amino-acid chain; its full sequence is Transcription factor RSL2 (352 aa).

The segment covering Ser160–Gly169 has biased composition (polar residues). Residues Ser160–Gln277 are disordered. The span at Lys183–Gln192 shows a compositional bias: basic residues. A compositionally biased stretch (polar residues) spans Ser223 to Cys232. Residues Ala272–Arg285 form a basic motif region. One can recognise a bHLH domain in the interval Ala272–Leu321. Positions Glu286–Leu321 are helix-loop-helix motif.

Homodimer. Expressed in roots. Expressed in root epidermal hair cells.

It localises to the nucleus. Its function is as follows. Transcription factor involved in the regulation of root hair elongation. Does not seem to be a direct transcriptional target of RHD6 and RSL1. Involved in the regulation of root hair elongation in response to low phosphate. The chain is Transcription factor RSL2 from Arabidopsis thaliana (Mouse-ear cress).